Here is a 293-residue protein sequence, read N- to C-terminus: Small ribosomal subunit protein uS2 (293 aa).

The segment at 265–293 is disordered; the sequence is DGGDWAASSAPAPGGENWAEAQPAEGAKW.

Belongs to the universal ribosomal protein uS2 family. In terms of assembly, component of the small ribosomal subunit. Mature ribosomes consist of a small (40S) and a large (60S) subunit. The 40S subunit contains about 33 different proteins and 1 molecule of RNA (18S). The 60S subunit contains about 49 different proteins and 3 molecules of RNA (25S, 5.8S and 5S). Interacts with rps21.

It localises to the cytoplasm. Required for the assembly and/or stability of the 40S ribosomal subunit. Required for the processing of the 20S rRNA-precursor to mature 18S rRNA in a late step of the maturation of 40S ribosomal subunits. The chain is Small ribosomal subunit protein uS2 (rps0) from Emericella nidulans (strain FGSC A4 / ATCC 38163 / CBS 112.46 / NRRL 194 / M139) (Aspergillus nidulans).